A 261-amino-acid polypeptide reads, in one-letter code: Segregation and condensation protein A (261 aa).

Belongs to the ScpA family. In terms of assembly, component of a cohesin-like complex composed of ScpA, ScpB and the Smc homodimer, in which ScpA and ScpB bind to the head domain of Smc. The presence of the three proteins is required for the association of the complex with DNA.

It is found in the cytoplasm. Participates in chromosomal partition during cell division. May act via the formation of a condensin-like complex containing Smc and ScpB that pull DNA away from mid-cell into both cell halves. This is Segregation and condensation protein A from Desulfitobacterium hafniense (strain DSM 10664 / DCB-2).